Reading from the N-terminus, the 611-residue chain is UvrABC system protein C (611 aa).

In terms of domain architecture, GIY-YIG spans 12-96; that stretch reads DQPGIYQYFD…IKQLKPKYNI (85 aa). The 36-residue stretch at 202-237 folds into the UVR domain; the sequence is EKILEILNQKMQKYAENLQFEEAAEIRDRIKSIESA.

It belongs to the UvrC family. In terms of assembly, interacts with UvrB in an incision complex.

Its subcellular location is the cytoplasm. The UvrABC repair system catalyzes the recognition and processing of DNA lesions. UvrC both incises the 5' and 3' sides of the lesion. The N-terminal half is responsible for the 3' incision and the C-terminal half is responsible for the 5' incision. This Nautilia profundicola (strain ATCC BAA-1463 / DSM 18972 / AmH) protein is UvrABC system protein C.